A 72-amino-acid polypeptide reads, in one-letter code: Putative membrane protein insertion efficiency factor (72 aa).

It belongs to the UPF0161 family.

The protein resides in the cell inner membrane. Its function is as follows. Could be involved in insertion of integral membrane proteins into the membrane. The chain is Putative membrane protein insertion efficiency factor from Trichodesmium erythraeum (strain IMS101).